The primary structure comprises 650 residues: Threonine--tRNA ligase, chloroplastic/mitochondrial 2 (650 aa).

The Zn(2+) site is built by C347, H398, and H524.

This sequence belongs to the class-II aminoacyl-tRNA synthetase family.

The protein resides in the plastid. Its subcellular location is the chloroplast. It is found in the mitochondrion. The enzyme catalyses tRNA(Thr) + L-threonine + ATP = L-threonyl-tRNA(Thr) + AMP + diphosphate + H(+). In Arabidopsis thaliana (Mouse-ear cress), this protein is Threonine--tRNA ligase, chloroplastic/mitochondrial 2.